The primary structure comprises 485 residues: MNEAVTIRGKERYKSGVMEYKKMGYWEPDYEPKDTDVIALFRVTPQDGVDPIEAAAAVAGESSTATWTVVWTDRLTAAEKYRAKCYRVDPVPNSLGQYFAYIAYDLDLFEPGSISNLTASIIGNVFGFKPLKALRLEDMRLPIAYVKTFQGPATGIVVERERMDKFGRPLLGATVKPKLGLSGRNYGRVVYEALKGGLDFTKDDENINSQPFMHWRERFQYCMEAVNKAQAQTGEIKGTYLNVTAATMEDMYERAEYAKELGSIIVMIDLVIGYTAIQSMAKWARKNDMILHLHRAGHSTYTRQRNHGVSFRVIAKWMRLAGVDHIHAGTVVGKLEGDPATTKGYYDICREDFNPMTLENGLFFDQHWASLNKLMPVASGGIHAGQMHQLLHLLGEDVVLQFGGGTIGHPMGIAAGATANRVALEAMILARNEGRDYLHEGPEILAKAAQTCTPLKAALDTWKNVTFNYESTDTPDYAPTPSVSV.

Substrate contacts are provided by asparagine 124 and threonine 174. The Proton acceptor role is filled by lysine 176. Position 178 (lysine 178) interacts with substrate. Residues lysine 202, aspartate 204, and glutamate 205 each coordinate Mg(2+). Lysine 202 bears the N6-carboxylysine mark. Histidine 294 functions as the Proton acceptor in the catalytic mechanism. Residues arginine 295, histidine 327, and serine 379 each contribute to the substrate site.

This sequence belongs to the RuBisCO large chain family. Type I subfamily. In terms of assembly, heterohexadecamer of 8 large chains and 8 small chains. The cofactor is Mg(2+).

It catalyses the reaction 2 (2R)-3-phosphoglycerate + 2 H(+) = D-ribulose 1,5-bisphosphate + CO2 + H2O. It carries out the reaction D-ribulose 1,5-bisphosphate + O2 = 2-phosphoglycolate + (2R)-3-phosphoglycerate + 2 H(+). Its function is as follows. RuBisCO catalyzes two reactions: the carboxylation of D-ribulose 1,5-bisphosphate, the primary event in carbon dioxide fixation, as well as the oxidative fragmentation of the pentose substrate. Both reactions occur simultaneously and in competition at the same active site. The polypeptide is Ribulose bisphosphate carboxylase large chain (Rhodopseudomonas palustris (strain ATCC BAA-98 / CGA009)).